We begin with the raw amino-acid sequence, 240 residues long: MILLISDLHLEEERPDITRAFLHFLATRATQAEALYILGDFFEVWIGDDAMTPFQESIARALHALSERGVRIYLMHGNRDFMIGQTFCHKAGCKLLADPSVVQLCGEPVLLMHGDSLCTRDEGYMRLRRLLRNPLSLFVLRNLPLATRRKLARKLRNESRTQTRMKASDIIDVTPELIPGVLAEHRVRTLIHGHTHRPATHDLEVDGQPAKRIVLGDWDRQGWALQVDENGYHQAPFALS.

Residues Asp7, His9, Asp40, Asn78, and His113 each contribute to the Mn(2+) site. 78-79 (NR) serves as a coordination point for substrate. Positions 121, 159, 163, 166, and 194 each coordinate substrate. Residues His194 and His196 each coordinate Mn(2+).

Belongs to the LpxH family. Mn(2+) is required as a cofactor.

It localises to the cell inner membrane. It catalyses the reaction UDP-2-N,3-O-bis[(3R)-3-hydroxytetradecanoyl]-alpha-D-glucosamine + H2O = 2-N,3-O-bis[(3R)-3-hydroxytetradecanoyl]-alpha-D-glucosaminyl 1-phosphate + UMP + 2 H(+). The protein operates within glycolipid biosynthesis; lipid IV(A) biosynthesis; lipid IV(A) from (3R)-3-hydroxytetradecanoyl-[acyl-carrier-protein] and UDP-N-acetyl-alpha-D-glucosamine: step 4/6. Functionally, hydrolyzes the pyrophosphate bond of UDP-2,3-diacylglucosamine to yield 2,3-diacylglucosamine 1-phosphate (lipid X) and UMP by catalyzing the attack of water at the alpha-P atom. Involved in the biosynthesis of lipid A, a phosphorylated glycolipid that anchors the lipopolysaccharide to the outer membrane of the cell. In Stutzerimonas stutzeri (strain A1501) (Pseudomonas stutzeri), this protein is UDP-2,3-diacylglucosamine hydrolase.